A 354-amino-acid polypeptide reads, in one-letter code: WASH complex subunit 3 (354 aa).

Residues 76 to 354 (SSANVPVHNT…DDDDDDDESW (279 aa)) form a disordered region. Residues 107 to 143 (IPPPPPPPPPPMTGVPPPPPPPPPPPISKSNIPPPPA) are compositionally biased toward pro residues. The span at 150 to 159 (ESDDDDEDNN) shows a compositional bias: acidic residues. Positions 213–244 (PQPPQPQPQSPSPQPPPPPTTTSSIPVPPPPF) are enriched in pro residues. The segment covering 251-260 (SDDDDDDDEG) has biased composition (acidic residues). Positions 277-290 (NNNSNSNSYSNNNN) are enriched in low complexity. Acidic residues-rich tracts occupy residues 293–307 (DDDD…DDDN) and 342–354 (DADD…DESW).

It belongs to the CCDC53 family. As to quaternary structure, probable component of the WASH complex.

This is WASH complex subunit 3 from Dictyostelium discoideum (Social amoeba).